The sequence spans 367 residues: Probable 7-methylxanthine methyltransferase 2 (367 aa).

S-adenosyl-L-homocysteine is bound at residue Y20. T27 contributes to the theobromine binding site. S-adenosyl-L-homocysteine is bound by residues C64, Q69, D101, L102, S134, and F135. Theobromine-binding residues include Y152, H155, and W156. Mg(2+) contacts are provided by N172, D258, F260, and N261. F313 lines the theobromine pocket.

This sequence belongs to the methyltransferase superfamily. Type-7 methyltransferase family. The cofactor is Mg(2+).

The catalysed reaction is 7-methylxanthine + S-adenosyl-L-methionine = theobromine + S-adenosyl-L-homocysteine + H(+). The protein operates within alkaloid biosynthesis. Its function is as follows. Involved in the biosynthesis of theobromine. In Theobroma cacao (Cacao), this protein is Probable 7-methylxanthine methyltransferase 2.